Consider the following 449-residue polypeptide: Aspartate aminotransferase 3, chloroplastic (449 aa).

A chloroplast-targeting transit peptide spans 1–43 (MKTTHFSSSSSSDRRIGALLRHLNSGSDSDNLSSLYASPTSGG). G81, W178, and N231 together coordinate L-aspartate. N6-(pyridoxal phosphate)lysine is present on K295. R423 is a binding site for L-aspartate.

Belongs to the class-I pyridoxal-phosphate-dependent aminotransferase family. As to quaternary structure, homodimer. It depends on pyridoxal 5'-phosphate as a cofactor. In terms of tissue distribution, expressed in roots, cauline leaves, flowers, hypocotyl epidermis and root hair cells.

Its subcellular location is the plastid. The protein resides in the chloroplast. It catalyses the reaction L-aspartate + 2-oxoglutarate = oxaloacetate + L-glutamate. In terms of biological role, amino acid aminotransferase important for the metabolism of amino acids and Krebs-cycle related organic acids. No activity with D-Asp or D-Ala as amino donors. In plants, it is involved in nitrogen metabolism and in aspects of carbon and energy metabolism. The sequence is that of Aspartate aminotransferase 3, chloroplastic (ASP3) from Arabidopsis thaliana (Mouse-ear cress).